The sequence spans 345 residues: Anthranilate phosphoribosyltransferase (345 aa).

5-phospho-alpha-D-ribose 1-diphosphate is bound by residues G80, 83–84 (GD), T88, 90–93 (NIST), 108–116 (KHGNRSVTS), and S120. G80 is a binding site for anthranilate. S92 is a binding site for Mg(2+). Residue N111 coordinates anthranilate. R166 lines the anthranilate pocket. Residues D229 and E230 each contribute to the Mg(2+) site.

This sequence belongs to the anthranilate phosphoribosyltransferase family. Homodimer. The cofactor is Mg(2+).

It carries out the reaction N-(5-phospho-beta-D-ribosyl)anthranilate + diphosphate = 5-phospho-alpha-D-ribose 1-diphosphate + anthranilate. Its pathway is amino-acid biosynthesis; L-tryptophan biosynthesis; L-tryptophan from chorismate: step 2/5. In terms of biological role, catalyzes the transfer of the phosphoribosyl group of 5-phosphorylribose-1-pyrophosphate (PRPP) to anthranilate to yield N-(5'-phosphoribosyl)-anthranilate (PRA). The polypeptide is Anthranilate phosphoribosyltransferase (Chlorobium phaeobacteroides (strain BS1)).